We begin with the raw amino-acid sequence, 440 residues long: Trigger factor (440 aa).

In terms of domain architecture, PPIase FKBP-type spans 163–248 (GEIVSVTFEA…VHVIKERTLP (86 aa)).

It belongs to the FKBP-type PPIase family. Tig subfamily.

It is found in the cytoplasm. The catalysed reaction is [protein]-peptidylproline (omega=180) = [protein]-peptidylproline (omega=0). Functionally, involved in protein export. Acts as a chaperone by maintaining the newly synthesized protein in an open conformation. Functions as a peptidyl-prolyl cis-trans isomerase. The chain is Trigger factor from Solidesulfovibrio magneticus (strain ATCC 700980 / DSM 13731 / RS-1) (Desulfovibrio magneticus).